The following is a 275-amino-acid chain: NH(3)-dependent NAD(+) synthetase (275 aa).

Position 50–57 (50–57 (GISGGVDS)) interacts with ATP. Asp-56 serves as a coordination point for Mg(2+). Position 147 (Arg-147) interacts with deamido-NAD(+). Residue Thr-167 participates in ATP binding. Glu-172 is a Mg(2+) binding site. Positions 180 and 187 each coordinate deamido-NAD(+). The ATP site is built by Lys-196 and Thr-218. 267-268 (HK) lines the deamido-NAD(+) pocket.

Belongs to the NAD synthetase family. As to quaternary structure, homodimer.

The enzyme catalyses deamido-NAD(+) + NH4(+) + ATP = AMP + diphosphate + NAD(+) + H(+). The protein operates within cofactor biosynthesis; NAD(+) biosynthesis; NAD(+) from deamido-NAD(+) (ammonia route): step 1/1. Functionally, catalyzes the ATP-dependent amidation of deamido-NAD to form NAD. Uses ammonia as a nitrogen source. This chain is NH(3)-dependent NAD(+) synthetase, found in Ectopseudomonas mendocina (strain ymp) (Pseudomonas mendocina).